The chain runs to 140 residues: Small ribosomal subunit protein uS11 (140 aa).

The segment at 116 to 140 is disordered; that stretch reads GRVEDVTPIPHDGTRPKGGRRGRRV.

This sequence belongs to the universal ribosomal protein uS11 family. As to quaternary structure, part of the 30S ribosomal subunit.

Located on the platform of the 30S subunit. This chain is Small ribosomal subunit protein uS11, found in Thermococcus kodakarensis (strain ATCC BAA-918 / JCM 12380 / KOD1) (Pyrococcus kodakaraensis (strain KOD1)).